Here is a 268-residue protein sequence, read N- to C-terminus: GTP cyclohydrolase III (268 aa).

Belongs to the archaeal-type GTP cyclohydrolase family. Homotrimer. Mg(2+) serves as cofactor.

It catalyses the reaction GTP + 3 H2O = 2-amino-5-formylamino-6-(5-phospho-D-ribosylamino)pyrimidin-4(3H)-one + 2 phosphate + 2 H(+). In terms of biological role, catalyzes the formation of 2-amino-5-formylamino-6-ribofuranosylamino-4(3H)-pyrimidinone ribonucleotide monophosphate and inorganic phosphate from GTP. Also has an independent pyrophosphate phosphohydrolase activity. The protein is GTP cyclohydrolase III (gch3) of Methanocaldococcus jannaschii (strain ATCC 43067 / DSM 2661 / JAL-1 / JCM 10045 / NBRC 100440) (Methanococcus jannaschii).